The following is a 342-amino-acid chain: N-acetyl-gamma-glutamyl-phosphate reductase (342 aa).

Residue Cys-146 is part of the active site.

It belongs to the NAGSA dehydrogenase family. Type 1 subfamily.

Its subcellular location is the cytoplasm. The enzyme catalyses N-acetyl-L-glutamate 5-semialdehyde + phosphate + NADP(+) = N-acetyl-L-glutamyl 5-phosphate + NADPH + H(+). Its pathway is amino-acid biosynthesis; L-arginine biosynthesis; N(2)-acetyl-L-ornithine from L-glutamate: step 3/4. Functionally, catalyzes the NADPH-dependent reduction of N-acetyl-5-glutamyl phosphate to yield N-acetyl-L-glutamate 5-semialdehyde. This chain is N-acetyl-gamma-glutamyl-phosphate reductase, found in Streptomyces coelicolor (strain ATCC BAA-471 / A3(2) / M145).